The following is a 204-amino-acid chain: uncharacterized protein (204 aa).

Catalysis depends on His-9, which acts as the Tele-phosphohistidine intermediate. Catalysis depends on Glu-86, which acts as the Proton donor/acceptor.

It belongs to the phosphoglycerate mutase family.

This is an uncharacterized protein from Acanthamoeba polyphaga (Amoeba).